Reading from the N-terminus, the 128-residue chain is Ribosome-binding factor A (128 aa).

The protein belongs to the RbfA family. As to quaternary structure, monomer. Binds 30S ribosomal subunits, but not 50S ribosomal subunits or 70S ribosomes.

The protein resides in the cytoplasm. Functionally, one of several proteins that assist in the late maturation steps of the functional core of the 30S ribosomal subunit. Associates with free 30S ribosomal subunits (but not with 30S subunits that are part of 70S ribosomes or polysomes). Required for efficient processing of 16S rRNA. May interact with the 5'-terminal helix region of 16S rRNA. This is Ribosome-binding factor A from Acidithiobacillus ferrooxidans (strain ATCC 23270 / DSM 14882 / CIP 104768 / NCIMB 8455) (Ferrobacillus ferrooxidans (strain ATCC 23270)).